A 335-amino-acid chain; its full sequence is Tetraacyldisaccharide 4'-kinase (335 aa).

Residue 58–65 (TVGGSGKT) participates in ATP binding.

The protein belongs to the LpxK family.

The enzyme catalyses a lipid A disaccharide + ATP = a lipid IVA + ADP + H(+). It participates in glycolipid biosynthesis; lipid IV(A) biosynthesis; lipid IV(A) from (3R)-3-hydroxytetradecanoyl-[acyl-carrier-protein] and UDP-N-acetyl-alpha-D-glucosamine: step 6/6. Its function is as follows. Transfers the gamma-phosphate of ATP to the 4'-position of a tetraacyldisaccharide 1-phosphate intermediate (termed DS-1-P) to form tetraacyldisaccharide 1,4'-bis-phosphate (lipid IVA). This chain is Tetraacyldisaccharide 4'-kinase, found in Shewanella sp. (strain MR-7).